A 216-amino-acid chain; its full sequence is Methylthioribulose-1-phosphate dehydratase (216 aa).

Residues histidine 101 and histidine 103 each coordinate Zn(2+).

The protein belongs to the aldolase class II family. MtnB subfamily. Zn(2+) serves as cofactor.

The enzyme catalyses 5-(methylsulfanyl)-D-ribulose 1-phosphate = 5-methylsulfanyl-2,3-dioxopentyl phosphate + H2O. The protein operates within amino-acid biosynthesis; L-methionine biosynthesis via salvage pathway; L-methionine from S-methyl-5-thio-alpha-D-ribose 1-phosphate: step 2/6. In terms of biological role, catalyzes the dehydration of methylthioribulose-1-phosphate (MTRu-1-P) into 2,3-diketo-5-methylthiopentyl-1-phosphate (DK-MTP-1-P). The chain is Methylthioribulose-1-phosphate dehydratase from Bradyrhizobium sp. (strain BTAi1 / ATCC BAA-1182).